The sequence spans 340 residues: Organic solute transporter subunit alpha (340 aa).

The Extracellular portion of the chain corresponds to 1–48 (MEPGRTQIKLDPRYTADLLEVLKTNYGIPSACFSQPPTAAQLLRALGP). Residues 49–69 (VELALTSILTLLALGSIAIFL) traverse the membrane as a helical segment. Topologically, residues 70–87 (EDAVYLYKNTLCPIKRRT) are cytoplasmic. The helical transmembrane segment at 88–108 (LLWKSSAPTVVSVLCCFGLWI) threads the bilayer. The Extracellular portion of the chain corresponds to 109-118 (PRSLVLVEMT). The helical transmembrane segment at 119–139 (ITSFYAVCFYLLMLVMVEGFG) threads the bilayer. Over 140–181 (GKEAVLRTLRDTPMMVHTGPCCCCCPCCPRLLLTRKKLQLLM) the chain is Cytoplasmic. Residues 182–202 (LGPFQYAFLKITLTLVGLFLV) traverse the membrane as a helical segment. The Extracellular portion of the chain corresponds to 203–218 (PDGIYDPADISEGSTA). The helical transmembrane segment at 219–239 (LWINTFLGVSTLLALWTLGII) threads the bilayer. At 240-255 (SRQARLHLGEQNMGAK) the chain is on the cytoplasmic side. A helical transmembrane segment spans residues 256–276 (FALFQVLLILTALQPSIFSVL). At 277 to 294 (ANGGQIACSPPYSSKTRS) the chain is on the extracellular side. Residues 295–317 (QVMNCHLLILETFLMTVLTRMYY) traverse the membrane as a helical segment. Topologically, residues 318-340 (RRKDHKVGYETFSSPDLDLNLKA) are cytoplasmic. Residue Ser-330 is modified to Phosphoserine.

It belongs to the OST-alpha family. As to quaternary structure, interacts with SLC51B. The Ost-alpha/Ost-beta complex is a heterodimer composed of alpha (SLC51A) and beta (SLC51B) subunit. Widely expressed with a high expression in ileum. Expressed in testis, colon, liver, small intestine, kidney, ovary and adrenal gland; and at low levels in heart, lung, brain, pituitary, thyroid gland, uterus, prostate, mammary gland and fat.

The protein localises to the cell membrane. The protein resides in the endoplasmic reticulum membrane. It carries out the reaction taurocholate(out) = taurocholate(in). The catalysed reaction is estrone 3-sulfate(out) = estrone 3-sulfate(in). The enzyme catalyses dehydroepiandrosterone 3-sulfate(out) = dehydroepiandrosterone 3-sulfate(in). It catalyses the reaction tauroursodeoxycholate(out) = tauroursodeoxycholate(in). It carries out the reaction glycoursodeoxycholate(out) = glycoursodeoxycholate(in). The catalysed reaction is glycocholate(out) = glycocholate(in). The enzyme catalyses taurochenodeoxycholate(out) = taurochenodeoxycholate(in). It catalyses the reaction glycochenodeoxycholate(out) = glycochenodeoxycholate(in). It carries out the reaction taurodeoxycholate(out) = taurodeoxycholate(in). The catalysed reaction is glycodeoxycholate(out) = glycodeoxycholate(in). The enzyme catalyses prostaglandin E2(out) = prostaglandin E2(in). Its function is as follows. Essential component of the Ost-alpha/Ost-beta complex, a heterodimer that acts as the intestinal basolateral transporter responsible for bile acid export from enterocytes into portal blood. Efficiently transports the major species of bile acids (taurocholate). Taurine conjugates are transported more efficiently across the basolateral membrane than glycine-conjugated bile acids. Can also transport steroids such as estrone 3-sulfate and dehydroepiandrosterone 3-sulfate, therefore playing a role in the enterohepatic circulation of sterols. Able to transport eicosanoids such as prostaglandin E2. This is Organic solute transporter subunit alpha (SLC51A) from Homo sapiens (Human).